Consider the following 111-residue polypeptide: C-type lectin lectoxin-Enh1 (111 aa).

An N-terminal signal peptide occupies residues 1–23; that stretch reads MGQFTVVSLGLLAMFLSLSGAKG. Cysteines 26 and 37 form a disulfide. A C-type lectin domain is found at 33 to 108; sequence RNGVCNKLFP…CASLHPFICQ (76 aa). The short motif at 72-74 is the Mannose-binding element; sequence EPN. Ca(2+)-binding residues include Glu-80, Asn-95, and Asp-96. An intrachain disulfide couples Cys-82 to Cys-99.

It belongs to the true venom lectin family. As to expression, expressed by the venom gland.

The protein resides in the secreted. Mannose-binding lectin which recognizes specific carbohydrate structures and agglutinates a variety of animal cells by binding to cell-surface glycoproteins and glycolipids. May be a calcium-dependent lectin. The sequence is that of C-type lectin lectoxin-Enh1 from Pseudoferania polylepis (Macleay's water snake).